We begin with the raw amino-acid sequence, 239 residues long: Enolase-phosphatase E1 (239 aa).

Positions 13 and 15 each coordinate Mg(2+). Substrate is bound by residues 133-134 (SS) and lysine 170. Aspartate 196 serves as a coordination point for Mg(2+).

It belongs to the HAD-like hydrolase superfamily. MasA/MtnC family. In terms of assembly, monomer. Requires Mg(2+) as cofactor.

Its subcellular location is the cytoplasm. The protein resides in the nucleus. The catalysed reaction is 5-methylsulfanyl-2,3-dioxopentyl phosphate + H2O = 1,2-dihydroxy-5-(methylsulfanyl)pent-1-en-3-one + phosphate. Its pathway is amino-acid biosynthesis; L-methionine biosynthesis via salvage pathway; L-methionine from S-methyl-5-thio-alpha-D-ribose 1-phosphate: step 3/6. The protein operates within amino-acid biosynthesis; L-methionine biosynthesis via salvage pathway; L-methionine from S-methyl-5-thio-alpha-D-ribose 1-phosphate: step 4/6. In terms of biological role, bifunctional enzyme that catalyzes the enolization of 2,3-diketo-5-methylthiopentyl-1-phosphate (DK-MTP-1-P) into the intermediate 2-hydroxy-3-keto-5-methylthiopentenyl-1-phosphate (HK-MTPenyl-1-P), which is then dephosphorylated to form the acireductone 1,2-dihydroxy-3-keto-5-methylthiopentene (DHK-MTPene). This is Enolase-phosphatase E1 from Chaetomium globosum (strain ATCC 6205 / CBS 148.51 / DSM 1962 / NBRC 6347 / NRRL 1970) (Soil fungus).